The sequence spans 87 residues: Small ribosomal subunit protein uS15 (87 aa).

This sequence belongs to the universal ribosomal protein uS15 family. Part of the 30S ribosomal subunit. Forms a bridge to the 50S subunit in the 70S ribosome, contacting the 23S rRNA.

One of the primary rRNA binding proteins, it binds directly to 16S rRNA where it helps nucleate assembly of the platform of the 30S subunit by binding and bridging several RNA helices of the 16S rRNA. In terms of biological role, forms an intersubunit bridge (bridge B4) with the 23S rRNA of the 50S subunit in the ribosome. In Dehalococcoides mccartyi (strain ATCC BAA-2266 / KCTC 15142 / 195) (Dehalococcoides ethenogenes (strain 195)), this protein is Small ribosomal subunit protein uS15.